Here is a 55-residue protein sequence, read N- to C-terminus: Large ribosomal subunit protein bL33 (55 aa).

The protein belongs to the bacterial ribosomal protein bL33 family.

In Azoarcus sp. (strain BH72), this protein is Large ribosomal subunit protein bL33.